Here is a 407-residue protein sequence, read N- to C-terminus: Cysteine desulfurase (407 aa).

The residue at position 226 (lysine 226) is an N6-(pyridoxal phosphate)lysine. Cysteine 364 acts as the Cysteine persulfide intermediate in catalysis.

Belongs to the class-V pyridoxal-phosphate-dependent aminotransferase family. Csd subfamily. As to quaternary structure, homodimer. Interacts with SufE and the SufBCD complex composed of SufB, SufC and SufD. The interaction with SufE is required to mediate the direct transfer of the sulfur atom from the S-sulfanylcysteine. Pyridoxal 5'-phosphate is required as a cofactor.

It is found in the cytoplasm. It carries out the reaction (sulfur carrier)-H + L-cysteine = (sulfur carrier)-SH + L-alanine. It catalyses the reaction L-selenocysteine + AH2 = hydrogenselenide + L-alanine + A + H(+). It participates in cofactor biosynthesis; iron-sulfur cluster biosynthesis. Its function is as follows. Cysteine desulfurases mobilize the sulfur from L-cysteine to yield L-alanine, an essential step in sulfur metabolism for biosynthesis of a variety of sulfur-containing biomolecules. Component of the suf operon, which is activated and required under specific conditions such as oxidative stress and iron limitation. Acts as a potent selenocysteine lyase in vitro, that mobilizes selenium from L-selenocysteine. Selenocysteine lyase activity is however unsure in vivo. This is Cysteine desulfurase from Pectobacterium atrosepticum (strain SCRI 1043 / ATCC BAA-672) (Erwinia carotovora subsp. atroseptica).